The following is a 147-amino-acid chain: D-aminoacyl-tRNA deacylase (147 aa).

The Gly-cisPro motif, important for rejection of L-amino acids motif lies at 136 to 137; that stretch reads GP.

This sequence belongs to the DTD family. In terms of assembly, homodimer.

Its subcellular location is the cytoplasm. It catalyses the reaction glycyl-tRNA(Ala) + H2O = tRNA(Ala) + glycine + H(+). It carries out the reaction a D-aminoacyl-tRNA + H2O = a tRNA + a D-alpha-amino acid + H(+). In terms of biological role, an aminoacyl-tRNA editing enzyme that deacylates mischarged D-aminoacyl-tRNAs. Also deacylates mischarged glycyl-tRNA(Ala), protecting cells against glycine mischarging by AlaRS. Acts via tRNA-based rather than protein-based catalysis; rejects L-amino acids rather than detecting D-amino acids in the active site. By recycling D-aminoacyl-tRNA to D-amino acids and free tRNA molecules, this enzyme counteracts the toxicity associated with the formation of D-aminoacyl-tRNA entities in vivo and helps enforce protein L-homochirality. The polypeptide is D-aminoacyl-tRNA deacylase (Persephonella marina (strain DSM 14350 / EX-H1)).